We begin with the raw amino-acid sequence, 533 residues long: Peptide chain release factor 3 (533 aa).

Positions 9–284 (ARRRTFAIIS…ALCELSPPPL (276 aa)) constitute a tr-type G domain. GTP contacts are provided by residues 18-25 (SHPDAGKT), 95-99 (DTPGH), and 149-152 (NKLD).

This sequence belongs to the TRAFAC class translation factor GTPase superfamily. Classic translation factor GTPase family. PrfC subfamily.

The protein localises to the cytoplasm. In terms of biological role, increases the formation of ribosomal termination complexes and stimulates activities of RF-1 and RF-2. It binds guanine nucleotides and has strong preference for UGA stop codons. It may interact directly with the ribosome. The stimulation of RF-1 and RF-2 is significantly reduced by GTP and GDP, but not by GMP. This Cupriavidus necator (strain ATCC 17699 / DSM 428 / KCTC 22496 / NCIMB 10442 / H16 / Stanier 337) (Ralstonia eutropha) protein is Peptide chain release factor 3.